Here is a 264-residue protein sequence, read N- to C-terminus: 3-methyl-2-oxobutanoate hydroxymethyltransferase (264 aa).

Mg(2+) is bound by residues Asp45 and Asp84. 3-methyl-2-oxobutanoate is bound by residues 45–46 (DS), Asp84, and Lys112. Glu114 lines the Mg(2+) pocket. Glu181 serves as the catalytic Proton acceptor.

Belongs to the PanB family. Homodecamer; pentamer of dimers. It depends on Mg(2+) as a cofactor.

Its subcellular location is the cytoplasm. It carries out the reaction 3-methyl-2-oxobutanoate + (6R)-5,10-methylene-5,6,7,8-tetrahydrofolate + H2O = 2-dehydropantoate + (6S)-5,6,7,8-tetrahydrofolate. It functions in the pathway cofactor biosynthesis; (R)-pantothenate biosynthesis; (R)-pantoate from 3-methyl-2-oxobutanoate: step 1/2. Its function is as follows. Catalyzes the reversible reaction in which hydroxymethyl group from 5,10-methylenetetrahydrofolate is transferred onto alpha-ketoisovalerate to form ketopantoate. The chain is 3-methyl-2-oxobutanoate hydroxymethyltransferase from Shigella dysenteriae serotype 1 (strain Sd197).